A 755-amino-acid polypeptide reads, in one-letter code: SWI/SNF-related matrix-associated actin-dependent regulator of chromatin subfamily A-like protein 1 (755 aa).

The stretch at 7–27 (SEIAEKKRIALAKLQAKKSQL) forms a coiled coil. 2 disordered regions span residues 26 to 91 (QLLA…NKSS) and 104 to 134 (SNRE…SLSS). Over residues 32–63 (PATNGKSTTSATGATQHANNGKSNPNQPQAKS) the composition is skewed to polar residues. Serine 63 bears the Phosphoserine mark. The HARP domain maps to 139 to 217 (PVAVLLGNSI…KPYVHMNGIP (79 aa)). In terms of domain architecture, Helicase ATP-binding spans 256–412 (CFAIAQKGRI…FTQLQMIDGK (157 aa)). 269–276 (DEMGLGKT) serves as a coordination point for ATP. Residues 361–364 (DESH) carry the DESH box motif. A Helicase C-terminal domain is found at 527–681 (YLKTLVKEQK…NLQKATHTAA (155 aa)).

The protein belongs to the SNF2/RAD54 helicase family. SMARCAL1 subfamily.

It localises to the nucleus. In terms of biological role, ATP-dependent annealing helicase that catalyzes the rewinding of the stably unwound DNA. This is SWI/SNF-related matrix-associated actin-dependent regulator of chromatin subfamily A-like protein 1 (Marcal1) from Drosophila melanogaster (Fruit fly).